A 116-amino-acid chain; its full sequence is MPGDNWTNSIIFRIKTLKDQIIEWSKNPTEENEYFSEKYLEKINTLTKTLDWCEKSNKSEVELRWLNQALSLPHQVPPPRYSYIRSESSRNNLRNSARNQPQNLVSEQDSDSNREN.

Residues 76 to 116 form a disordered region; it reads VPPPRYSYIRSESSRNNLRNSARNQPQNLVSEQDSDSNREN. Residues 85-99 show a composition bias toward low complexity; that stretch reads RSESSRNNLRNSARN.

This is an uncharacterized protein from Glycine max (Soybean).